We begin with the raw amino-acid sequence, 70 residues long: MKLTCVLIIAVLILTACQFIAADNTEYRKWRRSGTSTGMRLGSRDCGPWCWGQNKCCPDESCRSLHESCT.

An N-terminal signal peptide occupies residues 1–22 (MKLTCVLIIAVLILTACQFIAA). Positions 23–43 (DNTEYRKWRRSGTSTGMRLGS) are excised as a propeptide. Cystine bridges form between C46–C57, C50–C62, and C56–C69. 4-hydroxyproline occurs at positions 48 and 58. E60 and E67 each carry 4-carboxyglutamate.

Belongs to the conotoxin O1 superfamily. Expressed by the venom duct.

It is found in the secreted. In terms of biological role, probable neurotoxin with unknown target. Possibly targets ion channels. The polypeptide is Conotoxin Cal6.11 (Californiconus californicus (California cone)).